Consider the following 123-residue polypeptide: Holo-[acyl-carrier-protein] synthase (123 aa).

Mg(2+) contacts are provided by aspartate 8 and glutamate 55.

Belongs to the P-Pant transferase superfamily. AcpS family. It depends on Mg(2+) as a cofactor.

It localises to the cytoplasm. The enzyme catalyses apo-[ACP] + CoA = holo-[ACP] + adenosine 3',5'-bisphosphate + H(+). Its function is as follows. Transfers the 4'-phosphopantetheine moiety from coenzyme A to a Ser of acyl-carrier-protein. This is Holo-[acyl-carrier-protein] synthase from Caldicellulosiruptor saccharolyticus (strain ATCC 43494 / DSM 8903 / Tp8T 6331).